A 284-amino-acid chain; its full sequence is Steroidogenic acute regulatory protein, mitochondrial (284 aa).

A mitochondrion-targeting transit peptide spans methionine 1–leucine 62. Serine 56 and serine 194 each carry phosphoserine; by PKA. Positions leucine 66–alanine 279 constitute an START domain.

May interact with TSPO.

It localises to the mitochondrion. The enzyme catalyses cholesterol(in) = cholesterol(out). The protein operates within steroid metabolism; cholesterol metabolism. Its function is as follows. Plays a key role in steroid hormone synthesis by enhancing the metabolism of cholesterol into pregnenolone. Mediates the transfer of cholesterol from the outer mitochondrial membrane to the inner mitochondrial membrane where it is cleaved to pregnenolone. The polypeptide is Steroidogenic acute regulatory protein, mitochondrial (Star) (Rattus norvegicus (Rat)).